Reading from the N-terminus, the 441-residue chain is N-acetylmuramyl-L-alanine amidase (441 aa).

A signal peptide spans 1-25 (MKTKTLFIFSAILTLSIFAPNETFA).

The protein belongs to the peptidase S12 family.

It carries out the reaction Hydrolyzes the link between N-acetylmuramoyl residues and L-amino acid residues in certain cell-wall glycopeptides.. The protein operates within cell wall biogenesis; peptidoglycan recycling. Involved in muropeptide recycling. Hydrolyzes the amide bond between N-acetylmuramic acid (MurNAc) and the L-alanine residue of the stem peptide. Cannot hydrolyze muropeptides containing N-acetylglucosamine (GlcNAc) at the non-reducing end. The sequence is that of N-acetylmuramyl-L-alanine amidase from Bacillus subtilis (strain 168).